Consider the following 118-residue polypeptide: Large ribosomal subunit protein bL19 (118 aa).

Belongs to the bacterial ribosomal protein bL19 family.

In terms of biological role, this protein is located at the 30S-50S ribosomal subunit interface and may play a role in the structure and function of the aminoacyl-tRNA binding site. This is Large ribosomal subunit protein bL19 from Campylobacter jejuni subsp. doylei (strain ATCC BAA-1458 / RM4099 / 269.97).